The chain runs to 611 residues: Chaperone protein DnaK (611 aa).

Position 173 is a phosphothreonine; by autocatalysis (T173). Disordered stretches follow at residues 525–548 (DNISEEDKSNAESKKDALKSALEG) and 573–611 (YQQAQQAQQQAQDGAQQTQNDSNVEDAEFKEVNDDEDKK). The span at 529–542 (EEDKSNAESKKDAL) shows a compositional bias: basic and acidic residues. Over residues 574–591 (QQAQQAQQQAQDGAQQTQ) the composition is skewed to low complexity. Residues 599–611 (AEFKEVNDDEDKK) show a composition bias toward basic and acidic residues.

Belongs to the heat shock protein 70 family.

Its function is as follows. Acts as a chaperone. The protein is Chaperone protein DnaK of Staphylococcus haemolyticus (strain JCSC1435).